Consider the following 198-residue polypeptide: GTP cyclohydrolase-2 (198 aa).

A GTP-binding site is contributed by 49–53; it reads RVHSE. Zn(2+) is bound by residues Cys-54, Cys-65, and Cys-67. Residues Gln-70, 92–94, and Thr-114 contribute to the GTP site; that span reads EGR. The active-site Proton acceptor is Asp-126. The active-site Nucleophile is Arg-128. GTP-binding residues include Thr-149 and Lys-154.

Belongs to the GTP cyclohydrolase II family. In terms of assembly, homodimer. It depends on Zn(2+) as a cofactor.

It catalyses the reaction GTP + 4 H2O = 2,5-diamino-6-hydroxy-4-(5-phosphoribosylamino)-pyrimidine + formate + 2 phosphate + 3 H(+). It participates in cofactor biosynthesis; riboflavin biosynthesis; 5-amino-6-(D-ribitylamino)uracil from GTP: step 1/4. Its function is as follows. Catalyzes the conversion of GTP to 2,5-diamino-6-ribosylamino-4(3H)-pyrimidinone 5'-phosphate (DARP), formate and pyrophosphate. The protein is GTP cyclohydrolase-2 of Escherichia fergusonii (strain ATCC 35469 / DSM 13698 / CCUG 18766 / IAM 14443 / JCM 21226 / LMG 7866 / NBRC 102419 / NCTC 12128 / CDC 0568-73).